A 402-amino-acid chain; its full sequence is Secreted RxLR effector protein 73 (402 aa).

The N-terminal stretch at 1 to 23 (MRLLHVVVATVSLTGAITSLIAA) is a signal peptide. N-linked (GlcNAc...) asparagine glycosylation is present at N27. The RxLR signature appears at 104–107 (RVLR). N111, N134, N143, N165, and N286 each carry an N-linked (GlcNAc...) asparagine glycan.

The protein belongs to the RxLR effector family.

Its subcellular location is the secreted. The protein resides in the host cell. Functionally, secreted effector that completely suppresses the host cell death induced by cell death-inducing proteins. The protein is Secreted RxLR effector protein 73 of Plasmopara viticola (Downy mildew of grapevine).